Reading from the N-terminus, the 792-residue chain is Probable exo-1,4-beta-xylosidase xlnD (792 aa).

Positions M1 to A20 are cleaved as a signal peptide. Residues N23, N87, N142, and N246 are each glycosylated (N-linked (GlcNAc...) asparagine). D310 is an active-site residue. N-linked (GlcNAc...) asparagine glycans are attached at residues N326, N385, N391, N404, N438, N475, N479, N516, N677, and N699.

It belongs to the glycosyl hydrolase 3 family.

Its subcellular location is the secreted. The enzyme catalyses Hydrolysis of (1-&gt;4)-beta-D-xylans, to remove successive D-xylose residues from the non-reducing termini.. It functions in the pathway glycan degradation; xylan degradation. Functionally, xylan 1,4-beta-xylosidase involved in the hydrolysis of xylan, a major structural heterogeneous polysaccharide found in plant biomass representing the second most abundant polysaccharide in the biosphere, after cellulose. The sequence is that of Probable exo-1,4-beta-xylosidase xlnD (xlnD) from Aspergillus clavatus (strain ATCC 1007 / CBS 513.65 / DSM 816 / NCTC 3887 / NRRL 1 / QM 1276 / 107).